We begin with the raw amino-acid sequence, 30 residues long: Gamma-II crystallin (30 aa).

Residues 1–30 form the Beta/gamma crystallin 'Greek key' domain; sequence GKITFYEDRNFQGRCYECSTDCPDLSPYFS.

Belongs to the beta/gamma-crystallin family. In terms of assembly, monomer.

Its function is as follows. Crystallins are the dominant structural components of the vertebrate eye lens. This chain is Gamma-II crystallin, found in Rhizoprionodon acutus (Milk shark).